Consider the following 72-residue polypeptide: uncharacterized protein (72 aa).

This is an uncharacterized protein from Mycobacterium tuberculosis (strain ATCC 25618 / H37Rv).